The sequence spans 226 residues: Thioredoxin domain-containing protein 9 (226 aa).

The region spanning 75–180 (EIGSERDFFQ…TTETLEWRLG (106 aa)) is the Thioredoxin domain. A phosphoserine mark is found at serine 188, serine 221, and serine 223.

As to quaternary structure, forms ternary complexes with the chaperonin TCP1 complex, spanning the cylindrical chaperonin cavity and contacting at least 2 subunits.

It is found in the cytoplasm. It localises to the nucleus. Its subcellular location is the cytoskeleton. The protein resides in the microtubule organizing center. The protein localises to the centrosome. It is found in the midbody. In terms of biological role, significantly diminishes the chaperonin TCP1 complex ATPase activity, thus negatively impacts protein folding, including that of actin or tubulin. This is Thioredoxin domain-containing protein 9 (Txndc9) from Rattus norvegicus (Rat).